The primary structure comprises 385 residues: S-adenosylmethionine synthase (385 aa).

His16 serves as a coordination point for ATP. Residue Asp18 coordinates Mg(2+). Glu44 lines the K(+) pocket. 2 residues coordinate L-methionine: Glu57 and Gln100. The tract at residues 100 to 110 (QSPDINQGVDR) is flexible loop. ATP-binding positions include 164 to 166 (DGK), 230 to 231 (KF), Asp239, 245 to 246 (RK), Ala262, and Lys266. Asp239 contributes to the L-methionine binding site. Lys270 serves as a coordination point for L-methionine.

The protein belongs to the AdoMet synthase family. In terms of assembly, homotetramer; dimer of dimers. It depends on Mg(2+) as a cofactor. Requires K(+) as cofactor.

The protein resides in the cytoplasm. The catalysed reaction is L-methionine + ATP + H2O = S-adenosyl-L-methionine + phosphate + diphosphate. It functions in the pathway amino-acid biosynthesis; S-adenosyl-L-methionine biosynthesis; S-adenosyl-L-methionine from L-methionine: step 1/1. Functionally, catalyzes the formation of S-adenosylmethionine (AdoMet) from methionine and ATP. The overall synthetic reaction is composed of two sequential steps, AdoMet formation and the subsequent tripolyphosphate hydrolysis which occurs prior to release of AdoMet from the enzyme. This chain is S-adenosylmethionine synthase, found in Helicobacter pylori (strain G27).